The sequence spans 192 residues: MAAMSEDSCVNFKEMMFIDNTLYFIPEENGDLESDNFGRLHCTTAVIRNINDQVLFVDKRQPVFEDMTDIDQSASEPQTRLIIYMYKDSEVRGLAVTLSVKDSKMSTLSCKNKIISFEEMDPPENIDDIQSDLIFFQKRVPGHNKMEFESSLYEGHFLACQKEDDAFKLILKKKDENGDKSVMFTLTNLHQS.

Residues 1–35 (MAAMSEDSCVNFKEMMFIDNTLYFIPEENGDLESD) constitute a propeptide that is removed on maturation.

It belongs to the IL-1 family. Forms a ternary complex with ligand-binding receptor subunit IL18R1 and signaling receptor subunit IL18RAP at the plasma membrane. Mature IL18 first binds to IL18R1 forming a low affinity binary complex, which then interacts with IL18RAP to form a high affinity ternary complex that signals inside the cell. Interacts with cargo receptor TMED10; the interaction mediates the translocation from the cytoplasm into the ERGIC (endoplasmic reticulum-Golgi intermediate compartment) and thereby secretion. Post-translationally, the pro-IL-18 precursor is processed by CASP1 to yield its mature, active form. The pro-IL-18 precursor is however not processed by Casp4/Casp11 in rodents. The pro-IL-18 precursor features autoinhibitory interactions between the propeptide and the post-cleavage-site region, preventing recognition by the IL18R1 receptor. Processing by CASP1 induces conformational changes to generate critical receptor-binding sites. The mature form is then secreted and released in the extracellular milieu by passing through the gasdermin-D (GSDMD) pore. In contrast, cleavage by CASP3 inactivates IL18.

It localises to the cytoplasm. The protein resides in the secreted. In terms of biological role, pro-inflammatory cytokine primarily involved in epithelial barrier repair, polarized T-helper 1 (Th1) cell and natural killer (NK) cell immune responses. Upon binding to IL18R1 and IL18RAP, forms a signaling ternary complex which activates NF-kappa-B, triggering synthesis of inflammatory mediators. Synergizes with IL12/interleukin-12 to induce IFNG synthesis from T-helper 1 (Th1) cells and natural killer (NK) cells. Involved in transduction of inflammation downstream of pyroptosis: its mature form is specifically released in the extracellular milieu by passing through the gasdermin-D (GSDMD) pore. In Mus musculus (Mouse), this protein is Interleukin-18.